The following is a 447-amino-acid chain: UDP-glycosyltransferase 76E5 (447 aa).

UDP-alpha-D-glucose contacts are provided by residues serine 272, 324–326 (APQ), 341–349 (HCGWNSTLE), and 363–366 (NGEQ).

The protein belongs to the UDP-glycosyltransferase family.

The polypeptide is UDP-glycosyltransferase 76E5 (UGT76E5) (Arabidopsis thaliana (Mouse-ear cress)).